Consider the following 490-residue polypeptide: Aspartyl/glutamyl-tRNA(Asn/Gln) amidotransferase subunit B (490 aa).

This sequence belongs to the GatB/GatE family. GatB subfamily. Heterotrimer of A, B and C subunits.

The catalysed reaction is L-glutamyl-tRNA(Gln) + L-glutamine + ATP + H2O = L-glutaminyl-tRNA(Gln) + L-glutamate + ADP + phosphate + H(+). The enzyme catalyses L-aspartyl-tRNA(Asn) + L-glutamine + ATP + H2O = L-asparaginyl-tRNA(Asn) + L-glutamate + ADP + phosphate + 2 H(+). In terms of biological role, allows the formation of correctly charged Asn-tRNA(Asn) or Gln-tRNA(Gln) through the transamidation of misacylated Asp-tRNA(Asn) or Glu-tRNA(Gln) in organisms which lack either or both of asparaginyl-tRNA or glutaminyl-tRNA synthetases. The reaction takes place in the presence of glutamine and ATP through an activated phospho-Asp-tRNA(Asn) or phospho-Glu-tRNA(Gln). This is Aspartyl/glutamyl-tRNA(Asn/Gln) amidotransferase subunit B from Prochlorococcus marinus subsp. pastoris (strain CCMP1986 / NIES-2087 / MED4).